The sequence spans 35 residues: Cytochrome b6-f complex subunit 5 (35 aa).

The helical transmembrane segment at 5–25 (LLCGIVLGLIPVTLTGLFVAA) threads the bilayer.

It belongs to the PetG family. As to quaternary structure, the 4 large subunits of the cytochrome b6-f complex are cytochrome b6, subunit IV (17 kDa polypeptide, PetD), cytochrome f and the Rieske protein, while the 4 small subunits are PetG, PetL, PetM and PetN. The complex functions as a dimer.

The protein resides in the plastid. The protein localises to the organellar chromatophore thylakoid membrane. Its function is as follows. Component of the cytochrome b6-f complex, which mediates electron transfer between photosystem II (PSII) and photosystem I (PSI), cyclic electron flow around PSI, and state transitions. PetG is required for either the stability or assembly of the cytochrome b6-f complex. The chain is Cytochrome b6-f complex subunit 5 from Paulinella chromatophora.